The sequence spans 271 residues: Cyclase-like protein 3 (271 aa).

Residues 1-21 (MYHLLIIITTLSFSSINITFA) form the signal peptide.

The protein belongs to the Cyclase 1 superfamily.

It localises to the secreted. Its subcellular location is the extracellular space. The protein resides in the extracellular matrix. The chain is Cyclase-like protein 3 from Arabidopsis thaliana (Mouse-ear cress).